A 152-amino-acid polypeptide reads, in one-letter code: Large ribosomal subunit protein uL13 (152 aa).

The disordered stretch occupies residues 133–152 (EHPHQAQKPQPLTINTIPGA). Residues 139-152 (QKPQPLTINTIPGA) show a composition bias toward polar residues.

This sequence belongs to the universal ribosomal protein uL13 family. As to quaternary structure, part of the 50S ribosomal subunit.

Functionally, this protein is one of the early assembly proteins of the 50S ribosomal subunit, although it is not seen to bind rRNA by itself. It is important during the early stages of 50S assembly. This is Large ribosomal subunit protein uL13 from Thermosynechococcus vestitus (strain NIES-2133 / IAM M-273 / BP-1).